A 427-amino-acid polypeptide reads, in one-letter code: Serine hydroxymethyltransferase (427 aa).

(6S)-5,6,7,8-tetrahydrofolate contacts are provided by residues L122 and G126–L128. An N6-(pyridoxal phosphate)lysine modification is found at K231. S355–F357 is a binding site for (6S)-5,6,7,8-tetrahydrofolate.

It belongs to the SHMT family. Homodimer. It depends on pyridoxal 5'-phosphate as a cofactor.

It localises to the cytoplasm. The enzyme catalyses (6R)-5,10-methylene-5,6,7,8-tetrahydrofolate + glycine + H2O = (6S)-5,6,7,8-tetrahydrofolate + L-serine. Its pathway is one-carbon metabolism; tetrahydrofolate interconversion. The protein operates within amino-acid biosynthesis; glycine biosynthesis; glycine from L-serine: step 1/1. Catalyzes the reversible interconversion of serine and glycine with tetrahydrofolate (THF) serving as the one-carbon carrier. This reaction serves as the major source of one-carbon groups required for the biosynthesis of purines, thymidylate, methionine, and other important biomolecules. Also exhibits THF-independent aldolase activity toward beta-hydroxyamino acids, producing glycine and aldehydes, via a retro-aldol mechanism. The polypeptide is Serine hydroxymethyltransferase (Nostoc sp. (strain PCC 7120 / SAG 25.82 / UTEX 2576)).